The primary structure comprises 533 residues: Acyl-CoA-binding domain-containing protein 5 (533 aa).

Positions 42-131 (HETRFEAAVK…MKKILETMPM (90 aa)) constitute an ACB domain. An acyl-CoA contacts are provided by residues 53–62 (IQSLPKNGSF), 73–77 (YSFYK), K99, and Y118. The segment at 182–227 (TPNAKTVNGKAESSDSGAESEEEAAQEDPKRPEPRDSDKKMMKKSA) is disordered. Phosphoserine occurs at positions 194, 195, 197, and 201. Residues 208–227 (EDPKRPEPRDSDKKMMKKSA) show a composition bias toward basic and acidic residues. Phosphoserine is present on residues S244 and S314. Residues 339–443 (GGNPSQPLES…ERWGSDRGSR (105 aa)) are disordered. The segment covering 374-383 (GKGEVKRGGE) has biased composition (basic and acidic residues). S429 carries the post-translational modification Phosphoserine. Residues 432 to 442 (DGERWGSDRGS) show a composition bias toward basic and acidic residues. Positions 448–478 (EQIALVLMRLQEDMQNVLQRLHKLEMLAASQ) form a coiled coil. Residue K470 is modified to N6-acetyllysine. Residues 503 to 525 (SPGALTFAIIWPFIAQWLVHLYY) traverse the membrane as a helical segment.

This sequence belongs to the ATG37 family. In terms of tissue distribution, highly expressed in brain and liver. Lower levels of expression in spleen and heart.

The protein localises to the peroxisome membrane. Its function is as follows. Acyl-CoA binding protein which acts as the peroxisome receptor for pexophagy but is dispensable for aggrephagy and nonselective autophagy. Binds medium- and long-chain acyl-CoA esters. The polypeptide is Acyl-CoA-binding domain-containing protein 5 (ACBD5) (Bos taurus (Bovine)).